Here is a 378-residue protein sequence, read N- to C-terminus: Actin-related protein 2/3 complex subunit 1B (378 aa).

WD repeat units follow at residues 8–47, 53–92, 97–138, 143–182, 203–242, 257–295, and 331–375; these read RFAE…HWER, KHDQ…WVPT, RLNR…WVSK, RHES…VDTK, LSYS…PLAQ, ISEK…KAAS, and VHDN…QELG. Residues 319–340 form a disordered region; that stretch reads TTANDASDSRGGVHDNSITSIV.

This sequence belongs to the WD repeat ARPC1 family. In terms of assembly, component of the Arp2/3 complex composed of ARP2, ARP3, ARPC1/p41-ARC, ARPC2/p34-ARC, ARPC3/p21-ARC, ARPC4/p20-ARC and ARPC5/p16-ARC. Expressed at low levels in all tissues with a relatively highest expression in inflorescences.

The protein localises to the cytoplasm. The protein resides in the cytoskeleton. Functions as a component of the Arp2/3 complex which is involved in regulation of actin polymerization and together with an activating nucleation-promoting factor (NPF) mediates the formation of branched actin networks. Arp2/3 complex plays a critical role in the control of cell morphogenesis via the modulation of cell polarity development. This Arabidopsis thaliana (Mouse-ear cress) protein is Actin-related protein 2/3 complex subunit 1B (ARPC1B).